Consider the following 228-residue polypeptide: 5'-methylthioadenosine/S-adenosylhomocysteine nucleosidase (228 aa).

Glu-11 acts as the Proton acceptor in catalysis. Substrate contacts are provided by residues Gly-77, Ile-151, and 172–173; that span reads ME. The active-site Proton donor is Asp-196.

Belongs to the PNP/UDP phosphorylase family. MtnN subfamily.

It catalyses the reaction S-adenosyl-L-homocysteine + H2O = S-(5-deoxy-D-ribos-5-yl)-L-homocysteine + adenine. The enzyme catalyses S-methyl-5'-thioadenosine + H2O = 5-(methylsulfanyl)-D-ribose + adenine. The catalysed reaction is 5'-deoxyadenosine + H2O = 5-deoxy-D-ribose + adenine. It participates in amino-acid biosynthesis; L-methionine biosynthesis via salvage pathway; S-methyl-5-thio-alpha-D-ribose 1-phosphate from S-methyl-5'-thioadenosine (hydrolase route): step 1/2. Functionally, catalyzes the irreversible cleavage of the glycosidic bond in both 5'-methylthioadenosine (MTA) and S-adenosylhomocysteine (SAH/AdoHcy) to adenine and the corresponding thioribose, 5'-methylthioribose and S-ribosylhomocysteine, respectively. Also cleaves 5'-deoxyadenosine, a toxic by-product of radical S-adenosylmethionine (SAM) enzymes, into 5-deoxyribose and adenine. This chain is 5'-methylthioadenosine/S-adenosylhomocysteine nucleosidase, found in Staphylococcus haemolyticus (strain JCSC1435).